Reading from the N-terminus, the 102-residue chain is MRVVIDQDLCGTTGQCVLTLPGTFRQREPDGVAEVCVATVPQALHAAVRLAASQCPVAAIRVIESDAGDDERASADPARSPAEAERHAAKDQRIPGGHDGTV.

Residues cysteine 10, cysteine 16, and cysteine 55 each contribute to the [3Fe-4S] cluster site. The tract at residues aspartate 66–valine 102 is disordered. The segment covering alanine 82 to arginine 93 has biased composition (basic and acidic residues).

The cofactor is [3Fe-4S] cluster.

Functionally, electron transport protein for the cytochrome systems. This is an uncharacterized protein from Sinorhizobium fredii (strain NBRC 101917 / NGR234).